A 184-amino-acid chain; its full sequence is dITP/XTP pyrophosphatase (184 aa).

Ser5–Lys10 is a binding site for substrate. Mg(2+)-binding residues include Glu33 and Asp62. The active-site Proton acceptor is Asp62. Substrate-binding positions include Ser63, Trp136–Asp139, Lys158, and His163–Arg164.

It belongs to the HAM1 NTPase family. As to quaternary structure, homodimer. Mg(2+) is required as a cofactor.

It carries out the reaction XTP + H2O = XMP + diphosphate + H(+). The enzyme catalyses dITP + H2O = dIMP + diphosphate + H(+). It catalyses the reaction ITP + H2O = IMP + diphosphate + H(+). In terms of biological role, pyrophosphatase that catalyzes the hydrolysis of nucleoside triphosphates to their monophosphate derivatives, with a high preference for the non-canonical purine nucleotides XTP (xanthosine triphosphate), dITP (deoxyinosine triphosphate) and ITP. Seems to function as a house-cleaning enzyme that removes non-canonical purine nucleotides from the nucleotide pool, thus preventing their incorporation into DNA/RNA and avoiding chromosomal lesions. The sequence is that of dITP/XTP pyrophosphatase from Korarchaeum cryptofilum (strain OPF8).